A 294-amino-acid chain; its full sequence is 4-hydroxy-tetrahydrodipicolinate synthase (294 aa).

Thr48 contacts pyruvate. The active-site Proton donor/acceptor is Tyr136. Residue Lys164 is the Schiff-base intermediate with substrate of the active site. Ile206 lines the pyruvate pocket.

It belongs to the DapA family. Homotetramer; dimer of dimers.

It localises to the cytoplasm. The enzyme catalyses L-aspartate 4-semialdehyde + pyruvate = (2S,4S)-4-hydroxy-2,3,4,5-tetrahydrodipicolinate + H2O + H(+). The protein operates within amino-acid biosynthesis; L-lysine biosynthesis via DAP pathway; (S)-tetrahydrodipicolinate from L-aspartate: step 3/4. Functionally, catalyzes the condensation of (S)-aspartate-beta-semialdehyde [(S)-ASA] and pyruvate to 4-hydroxy-tetrahydrodipicolinate (HTPA). This Phenylobacterium zucineum (strain HLK1) protein is 4-hydroxy-tetrahydrodipicolinate synthase.